The primary structure comprises 302 residues: ATP synthase subunit a (302 aa).

Transmembrane regions (helical) follow at residues 61–81 (VDSLAWSGGLGIIMCLLFWLG), 119–139 (IAPLSLVIFCWVFLMNLMDLI), 148–168 (FEWVMVTFFGWSAHEAYFKIV), 172–192 (DPNITLGMSFSVMFLIIFLTI), 214–234 (PVVKALLIPINLLLETIALLA), 252–272 (FVFILLAAMMGTWQFIGAWPW), and 273–293 (AVFHILVITLQAFIFMVLTIV).

Belongs to the ATPase A chain family. As to quaternary structure, F-type ATPases have 2 components, CF(1) - the catalytic core - and CF(0) - the membrane proton channel. CF(1) has five subunits: alpha(3), beta(3), gamma(1), delta(1), epsilon(1). CF(0) has three main subunits: a(1), b(2) and c(9-12). The alpha and beta chains form an alternating ring which encloses part of the gamma chain. CF(1) is attached to CF(0) by a central stalk formed by the gamma and epsilon chains, while a peripheral stalk is formed by the delta and b chains.

It localises to the cell inner membrane. Key component of the proton channel; it plays a direct role in the translocation of protons across the membrane. This is ATP synthase subunit a from Alcanivorax borkumensis (strain ATCC 700651 / DSM 11573 / NCIMB 13689 / SK2).